A 393-amino-acid chain; its full sequence is UDP-glucose 6-dehydrogenase (393 aa).

NAD(+)-binding residues include Val11, Asp31, Lys36, Thr85, Thr120, and Glu147. Substrate is bound by residues Glu143–Glu147, Lys199, Asn203, Tyr244–Ser248, and Gly252. Tyr254 is an NAD(+) binding site. Cys255 serves as the catalytic Nucleophile. Position 258 (Lys258) interacts with NAD(+). Lys309 contacts substrate. NAD(+) is bound at residue Arg316.

It belongs to the UDP-glucose/GDP-mannose dehydrogenase family. As to quaternary structure, homodimer.

The enzyme catalyses UDP-alpha-D-glucose + 2 NAD(+) + H2O = UDP-alpha-D-glucuronate + 2 NADH + 3 H(+). Its pathway is nucleotide-sugar biosynthesis; UDP-alpha-D-glucuronate biosynthesis; UDP-alpha-D-glucuronate from UDP-alpha-D-glucose: step 1/1. It functions in the pathway capsule biogenesis; capsule polysaccharide biosynthesis. Its function is as follows. Catalyzes the formation of UDP-glucuronic acid which is required for capsular polysaccharide synthesis. Does not catalyze the formation of glucuronamide moiety of the capsular polysaccharide. This chain is UDP-glucose 6-dehydrogenase, found in Campylobacter jejuni subsp. jejuni serotype O:2 (strain ATCC 700819 / NCTC 11168).